The primary structure comprises 240 residues: Lysoplasmalogenase TMEM86A (240 aa).

Topologically, residues 1-21 are cytoplasmic; that stretch reads MVSPVTVVKSEGPKLVPFFKA. Residues 22–42 form a helical membrane-spanning segment; that stretch reads TCVYFVLWLPSSSPSWVSTLI. Lys-43 is a topological domain (extracellular). Residues 44-64 form a helical membrane-spanning segment; that stretch reads CLPIFCLWLFLLAHGLGFLLA. The Cytoplasmic segment spans residues 65-70; sequence HPSATR. A helical membrane pass occupies residues 71 to 91; that stretch reads IFVGLVFSAVGDAFLIWQDQG. A topological domain (extracellular) is located at residue Tyr-92. Residues 93-113 traverse the membrane as a helical segment; that stretch reads FVHGLLMFAVTHMFYASAFGM. Residues 114–115 are Cytoplasmic-facing; that stretch reads QP. The helical transmembrane segment at 116-136 threads the bilayer; it reads LALRTGLVMAALSGLCYALLY. Over 137 to 138 the chain is Extracellular; that stretch reads PC. The chain crosses the membrane as a helical span at residues 139-159; that stretch reads LSGAFTYLVGVYVALIGFMGW. At 160 to 174 the chain is on the cytoplasmic side; the sequence is RAMAGLRLAGADWRW. A helical transmembrane segment spans residues 175 to 195; the sequence is TELAAGSGALFFIISDLTIAL. The Extracellular portion of the chain corresponds to 196-206; that stretch reads NKFCFPVPYSR. Residues 207–227 traverse the membrane as a helical segment; sequence ALIMSTYYVAQMLVALSAVES. Over 228-240 the chain is Cytoplasmic; that stretch reads REPVEHYRLTKAN.

The protein belongs to the TMEM86 family. Expressed in the macrophages.

It localises to the endoplasmic reticulum membrane. It catalyses the reaction a 1-O-(1Z-alkenyl)-sn-glycero-3-phosphocholine + H2O = a 2,3-saturated aldehyde + sn-glycerol 3-phosphocholine. The catalysed reaction is a 1-O-(1Z-alkenyl)-sn-glycero-3-phosphoethanolamine + H2O = a 2,3-saturated aldehyde + sn-glycero-3-phosphoethanolamine. Functionally, catalyzes the hydrolysis of the vinyl ether bond of choline or ethanolamine lysoplasmalogens, forming fatty aldehyde and glycerophosphocholine or glycerophosphoethanolamine, respectively and is specific for the sn-2-deacylated (lyso) form of plasmalogen. Plays an important role in lysoplasmalogen metabolism in the adipocyte tissue and macrophages. The polypeptide is Lysoplasmalogenase TMEM86A (TMEM86A) (Homo sapiens (Human)).